Reading from the N-terminus, the 171-residue chain is Peptidyl-prolyl cis-trans isomerase (171 aa).

The region spanning 7–170 is the PPIase cyclophilin-type domain; the sequence is FFDLTIGGAP…KPVVIADCGQ (164 aa).

It belongs to the cyclophilin-type PPIase family. Expressed in leaves, floral buds, growing shoots and stamens at anthesis.

Its subcellular location is the cytoplasm. The enzyme catalyses [protein]-peptidylproline (omega=180) = [protein]-peptidylproline (omega=0). Its activity is regulated as follows. Binds cyclosporin A (CsA). CsA mediates some of its effects via an inhibitory action on PPIase. PPIases accelerate the folding of proteins. It catalyzes the cis-trans isomerization of proline imidic peptide bonds in oligopeptides. In Solanum lycopersicum (Tomato), this protein is Peptidyl-prolyl cis-trans isomerase.